Here is a 508-residue protein sequence, read N- to C-terminus: uncharacterized protein (508 aa).

12 helical membrane-spanning segments follow: residues 65 to 87 (IFPVMCLVYCIQFLDKTSNSYAV), 104 to 124 (WSGTAFYLGYLVFEFPASLLL), 136 to 156 (FLVIWGFLLCMTSVANYPGFI), 160 to 180 (VLLGMMESAASPGFILLTAQW), 192 to 212 (VWVAFNGLGQILGSCMAYGLA), 224 to 244 (LIFIICGVLAIFLGFVILAVV), 292 to 312 (TWIMFVSSVLLNIPNGGIGTF), 333 to 353 (LPAGACEFGGLIAFGFLSLFI), 357 to 377 (MVLATITTCIALIGSCLLSFA), 384 to 404 (LAGYYLLMVSPGAMIVMFAII), 416 to 436 (TVGVIYLIGYCVGNLIGPQTF), and 450 to 470 (TMVGCYAATLVTFPALYYVNW).

Belongs to the major facilitator superfamily. Allantoate permease family.

The protein localises to the endoplasmic reticulum. It is found in the golgi apparatus. Its subcellular location is the membrane. This is an uncharacterized protein from Schizosaccharomyces pombe (strain 972 / ATCC 24843) (Fission yeast).